The sequence spans 472 residues: 3-isopropylmalate dehydratase large subunit (472 aa).

The disordered stretch occupies residues Thr-289 to Asp-312. Over residues Trp-290–Val-304 the composition is skewed to polar residues. [4Fe-4S] cluster contacts are provided by Cys-347, Cys-407, and Cys-410.

This sequence belongs to the aconitase/IPM isomerase family. LeuC type 1 subfamily. Heterodimer of LeuC and LeuD. [4Fe-4S] cluster is required as a cofactor.

The catalysed reaction is (2R,3S)-3-isopropylmalate = (2S)-2-isopropylmalate. It functions in the pathway amino-acid biosynthesis; L-leucine biosynthesis; L-leucine from 3-methyl-2-oxobutanoate: step 2/4. In terms of biological role, catalyzes the isomerization between 2-isopropylmalate and 3-isopropylmalate, via the formation of 2-isopropylmaleate. In Halalkalibacterium halodurans (strain ATCC BAA-125 / DSM 18197 / FERM 7344 / JCM 9153 / C-125) (Bacillus halodurans), this protein is 3-isopropylmalate dehydratase large subunit.